Here is a 143-residue protein sequence, read N- to C-terminus: MFLGTHSPRLDEKGRIILPAKFREELADGLVLTRGQERCIYVFSQKEFERIHESMREAPLSSKQARDYIRVFLSGASDEVPDKQGRVTIPPALRAYAGLGRELAVIGAGTRAEIWDADAWNEYLNEKEAAFSETDDDNLPGFI.

SpoVT-AbrB domains follow at residues threonine 5–glutamate 47 and alanine 76–alanine 119.

The protein belongs to the MraZ family. As to quaternary structure, forms oligomers.

Its subcellular location is the cytoplasm. The protein localises to the nucleoid. The protein is Transcriptional regulator MraZ of Paenarthrobacter aurescens (strain TC1).